A 415-amino-acid chain; its full sequence is Probable G-protein coupled receptor 19 (415 aa).

At Met1–Ser69 the chain is on the extracellular side. 2 N-linked (GlcNAc...) asparagine glycosylation sites follow: Asn25 and Asn52. Residues Ile70–Ile90 form a helical membrane-spanning segment. Over His91–Tyr102 the chain is Cytoplasmic. A helical membrane pass occupies residues Phe103–Val123. Topologically, residues Leu124–Gln152 are extracellular. A disulfide bridge connects residues Cys138 and Cys210. The chain crosses the membrane as a helical span at residues Ile153–Phe173. Topologically, residues Lys174 to Arg182 are cytoplasmic. A helical transmembrane segment spans residues Met183–Gly203. The Extracellular segment spans residues Ser204–Thr221. Residues Ala222–Phe242 form a helical membrane-spanning segment. The Cytoplasmic portion of the chain corresponds to Tyr243–Met277. A helical transmembrane segment spans residues Phe278–Trp298. At His299–Ser309 the chain is on the extracellular side. Residues Leu310–Ile332 form a helical membrane-spanning segment. Topologically, residues Tyr333–Val415 are cytoplasmic.

The protein belongs to the G-protein coupled receptor 1 family. As to expression, abundant expression in the brain.

The protein resides in the cell membrane. In terms of biological role, G-protein coupled receptor that plays a role in the regulation of circadian rhythms and energy metabolism. Participates in maintaining proper circadian gene expression in the suprachiasmatic nucleus (SCN), the locus of the master circadian clock in the brain. May function as a coordinator of aging-associated metabolic dysfunction, stress response, DNA integrity management, and eventual senescence. Upon binding to adropin, modulates mitochondrial energy metabolism via the p44/42-PDK4 signaling pathway, influencing pyruvate dehydrogenase activity. In Rattus norvegicus (Rat), this protein is Probable G-protein coupled receptor 19 (Gpr19).